The following is a 692-amino-acid chain: DNA topoisomerase 4 subunit B (692 aa).

Residues tyrosine 53, asparagine 93, aspartate 120, 162–168 (GLHGVGI), and lysine 393 contribute to the ATP site. Positions 473–587 (AELFIVEGDS…AGHLYLAVPP (115 aa)) constitute a Toprim domain. Residues glutamate 479, aspartate 552, and aspartate 554 each contribute to the Mg(2+) site.

The protein belongs to the type II topoisomerase family. ParE type 1 subfamily. As to quaternary structure, heterotetramer composed of ParC and ParE. The cofactor is Mg(2+). It depends on Mn(2+) as a cofactor. Ca(2+) serves as cofactor.

It carries out the reaction ATP-dependent breakage, passage and rejoining of double-stranded DNA.. Topoisomerase IV is essential for chromosome segregation. It relaxes supercoiled DNA. Performs the decatenation events required during the replication of a circular DNA molecule. This chain is DNA topoisomerase 4 subunit B, found in Bartonella bacilliformis (strain ATCC 35685 / KC583 / Herrer 020/F12,63).